Here is a 727-residue protein sequence, read N- to C-terminus: Endothelin-converting enzyme homolog (727 aa).

The Cytoplasmic segment spans residues 1–44 (MSFNFSRYSGAYTTTFSFLLLALLIVSAVLLSRPYAPALLHAEE). The chain crosses the membrane as a helical; Signal-anchor for type II membrane protein span at residues 45-65 (AYCVSMSCVTAAASVLSLMDA). Residues 46-727 (YCVSMSCVTA…MNPVHKCEVW (682 aa)) enclose the Peptidase M13 domain. Cystine bridges form between Cys-47–Cys-52, Cys-70–Cys-712, Cys-78–Cys-672, Cys-134–Cys-392, and Cys-601–Cys-724. Residues 66 to 727 (TADPCSDFYQ…MNPVHKCEVW (662 aa)) are Extracellular-facing. 9 N-linked (GlcNAc...) asparagine glycosylation sites follow: Asn-138, Asn-160, Asn-164, Asn-169, Asn-222, Asn-309, Asn-337, Asn-340, and Asn-511. Position 564 (His-564) interacts with Zn(2+). Glu-565 is a catalytic residue. Residue His-568 participates in Zn(2+) binding. 2 N-linked (GlcNAc...) asparagine glycosylation sites follow: Asn-589 and Asn-608. Glu-624 is a Zn(2+) binding site. Catalysis depends on Asp-628, which acts as the Proton donor. Asn-656 is a glycosylation site (N-linked (GlcNAc...) asparagine).

The protein belongs to the peptidase M13 family. Requires Zn(2+) as cofactor. In terms of tissue distribution, highly expressed in brain and midgut, and to a lesser extent in fat body, ovaries, testes and haemocytes.

It is found in the cell membrane. The polypeptide is Endothelin-converting enzyme homolog (Locusta migratoria (Migratory locust)).